The sequence spans 980 residues: MFMFRNCAVLLVIGSICCFIYGLFRLHVEVEPNACRMTYMFGEPMFAKVGVRDGDQYPNYALYYYYEGLRQPLDPLKRRMTGAPVIFVPGNAGSYKQVRSLASVALRKAMSNDAGIHLDYYTIDYDEELSALYGGYLHRQQSYLKLCIRTILSIYEGRTEQPSIVLIGHSMGGKLAQSVLVDPAIGQHINTIISISTPLDQPVLNLDTQLEEFYDQTDAVLSKLRTATVPTMTTNVCDSLHQRPPSVQRMASQDSSARLDNVLLISTGGGNRDLLVRPGLTSSRFNDLHAMTSAIPKVSLSCDHLSAVWCLQFMQAINRFLFSVAYVREDRSSIAFGTNKQRNLQTALSTFVKPRRRQQNTVRFGAAGNWHEERRLVINKYFTNGLKGTFFDLIGLQRQERYRKAAIEALNVDDEDWLFGCSAEDNNKTGQLYCEKATSLMHLVQWLPNEDREPRSIALLDLHNLRKTYVHWTHLLVRLPPSAKRIGYNLDIYDPKERVTDIKMPRWYTMAKLPLINETLQGTLHHRVRISEMVDPYQSIRVIVEPLQCINPEYRVTARICVPWAAGFERFQTLKSFDQKPQLYVNVPTLVPRHYNTTLNPVTLELYLDPTCRYRISYEYSYSSALSRLVLEFYGWLPAHLVCVLLIVLRKQVETFYDVGTFRSLRPYVGYLQYTSLYIVTACRLLKKLIISSRVFPEPEPLDYSINVSIVIHCAAIALSLLATLGTWLALTLYGNAFYRLALRITRLSQATSNVMISIMTHLPITYGILTIATAMGTCSGVGLLLAFVFYFLMLSNAYKDYLEDFLWQKAANLVRGKPSAVTEQEDATEEQNEEQNALKQNDEQKQQQQEEEEPEACVGLQNFSFHVTLLLMLFVQLLLNAPSSLAWLRSRRHGINLPDPSLYPSIVVLASLSLLLQLRAPQKCQGYWMLSIAFYILAGVVLLYCQAAIYRLTYVIAGAFALLSAHQSLWILWGRVSRV.

Residues 1-7 (MFMFRNC) lie on the Cytoplasmic side of the membrane. The helical transmembrane segment at 8–28 (AVLLVIGSICCFIYGLFRLHV) threads the bilayer. At 29 to 628 (EVEPNACRMT…EYSYSSALSR (600 aa)) the chain is on the lumenal side. Ser170 is a catalytic residue. 3 N-linked (GlcNAc...) asparagine glycosylation sites follow: Asn427, Asn517, and Asn596. Residues 629–649 (LVLEFYGWLPAHLVCVLLIVL) traverse the membrane as a helical segment. The Cytoplasmic segment spans residues 650-709 (RKQVETFYDVGTFRSLRPYVGYLQYTSLYIVTACRLLKKLIISSRVFPEPEPLDYSINVS). A helical membrane pass occupies residues 710-730 (IVIHCAAIALSLLATLGTWLA). Residues 731 to 774 (LTLYGNAFYRLALRITRLSQATSNVMISIMTHLPITYGILTIAT) lie on the Lumenal side of the membrane. A helical transmembrane segment spans residues 775–795 (AMGTCSGVGLLLAFVFYFLML). Residues 796–867 (SNAYKDYLED…CVGLQNFSFH (72 aa)) are Cytoplasmic-facing. Positions 821 to 853 (AVTEQEDATEEQNEEQNALKQNDEQKQQQQEEE) are disordered. Positions 824–834 (EQEDATEEQNE) are enriched in acidic residues. A helical transmembrane segment spans residues 868–888 (VTLLLMLFVQLLLNAPSSLAW). Over 889–895 (LRSRRHG) the chain is Lumenal. Residues 896 to 916 (INLPDPSLYPSIVVLASLSLL) traverse the membrane as a helical segment. Residues 917-929 (LQLRAPQKCQGYW) lie on the Cytoplasmic side of the membrane. The helical transmembrane segment at 930–950 (MLSIAFYILAGVVLLYCQAAI) threads the bilayer. The Lumenal segment spans residues 951–954 (YRLT). A helical transmembrane segment spans residues 955 to 975 (YVIAGAFALLSAHQSLWILWG). Residues 976–980 (RVSRV) are Cytoplasmic-facing.

This sequence belongs to the GPI inositol-deacylase family.

Its subcellular location is the endoplasmic reticulum membrane. Its function is as follows. Involved in inositol deacylation of GPI-anchored proteins. The sequence is that of GPI inositol-deacylase from Drosophila melanogaster (Fruit fly).